A 179-amino-acid chain; its full sequence is Large ribosomal subunit protein bL27c (179 aa).

The transit peptide at 1–51 directs the protein to the chloroplast; that stretch reads MAVSFSLVGAFKGLSLASSSSFLKGDFGAAFPVAPKFSVSFPLKSPLTIES.

It belongs to the bacterial ribosomal protein bL27 family. Part of the 50S ribosomal subunit.

The protein resides in the plastid. Its subcellular location is the chloroplast. The polypeptide is Large ribosomal subunit protein bL27c (RPL27) (Nicotiana tabacum (Common tobacco)).